A 138-amino-acid chain; its full sequence is Nucleoside diphosphate kinase (138 aa).

Residues K9, F57, R85, T91, R102, and N112 each contribute to the ATP site. Residue H115 is the Pros-phosphohistidine intermediate of the active site.

This sequence belongs to the NDK family. Homotetramer. The cofactor is Mg(2+).

It is found in the cytoplasm. It carries out the reaction a 2'-deoxyribonucleoside 5'-diphosphate + ATP = a 2'-deoxyribonucleoside 5'-triphosphate + ADP. It catalyses the reaction a ribonucleoside 5'-diphosphate + ATP = a ribonucleoside 5'-triphosphate + ADP. Functionally, major role in the synthesis of nucleoside triphosphates other than ATP. The ATP gamma phosphate is transferred to the NDP beta phosphate via a ping-pong mechanism, using a phosphorylated active-site intermediate. This is Nucleoside diphosphate kinase from Lawsonia intracellularis (strain PHE/MN1-00).